The primary structure comprises 225 residues: tRNA (guanine-N(1)-)-methyltransferase (225 aa).

S-adenosyl-L-methionine contacts are provided by residues G112 and 132–137; that span reads IGDYVL.

This sequence belongs to the RNA methyltransferase TrmD family. Homodimer.

Its subcellular location is the cytoplasm. It carries out the reaction guanosine(37) in tRNA + S-adenosyl-L-methionine = N(1)-methylguanosine(37) in tRNA + S-adenosyl-L-homocysteine + H(+). Functionally, specifically methylates guanosine-37 in various tRNAs. The polypeptide is tRNA (guanine-N(1)-)-methyltransferase (Flavobacterium psychrophilum (strain ATCC 49511 / DSM 21280 / CIP 103535 / JIP02/86)).